Reading from the N-terminus, the 199-residue chain is Putative inactive ribonuclease 11 (199 aa).

An N-terminal signal peptide occupies residues 1–16 (METFPLLLLSLGLVLA). N-linked (GlcNAc...) asparagine glycosylation is present at N61. The Proton acceptor role is filled by H82. 2 N-linked (GlcNAc...) asparagine glycosylation sites follow: N89 and N111. Disulfide bonds link C98–C158 and C114–C169. Residue 115–119 (KWSNN) coordinates substrate.

Belongs to the pancreatic ribonuclease family.

It is found in the secreted. The chain is Putative inactive ribonuclease 11 (RNASE11) from Homo sapiens (Human).